The following is a 1010-amino-acid chain: Phosphatidylserine decarboxylase proenzyme 2 (1010 aa).

C2 domains lie at 1-114 and 247-370; these read MSQA…SSWE and DFES…DKPC. Residues D342, S345, and D348 each contribute to the Ca(2+) site. Residues 458 to 493 form the EF-hand domain; that stretch reads LRRQLWMHLLQGNDTQMKGTLDLIELNYFVDCLGSN. Active-site charge relay system; for autoendoproteolytic cleavage activity residues include D734, H793, and S880. S880 acts as the Schiff-base intermediate with substrate; via pyruvic acid; for decarboxylase activity in catalysis. S880 carries the post-translational modification Pyruvic acid (Ser); by autocatalysis.

The protein belongs to the phosphatidylserine decarboxylase family. PSD-B subfamily. Eukaryotic type II sub-subfamily. Heterodimer of a large membrane-associated beta subunit and a small pyruvoyl-containing alpha subunit. Interacts with pstB2. This interaction may be a means to structurally tether the donor membrane (ER) harboring PstB2 to acceptor membranes (Golgi/endosomes) harboring PSD2 during PtdSer transport to the site of PtdEtn synthesis. It depends on pyruvate as a cofactor. Ca(2+) is required as a cofactor. Is synthesized initially as an inactive proenzyme. Formation of the active enzyme involves a self-maturation process in which the active site pyruvoyl group is generated from an internal serine residue via an autocatalytic post-translational modification. Two non-identical subunits are generated from the proenzyme in this reaction, and the pyruvate is formed at the N-terminus of the alpha chain, which is derived from the carboxyl end of the proenzyme. The autoendoproteolytic cleavage occurs by a canonical serine protease mechanism, in which the side chain hydroxyl group of the serine supplies its oxygen atom to form the C-terminus of the beta chain, while the remainder of the serine residue undergoes an oxidative deamination to produce ammonia and the pyruvoyl prosthetic group on the alpha chain. During this reaction, the Ser that is part of the protease active site of the proenzyme becomes the pyruvoyl prosthetic group, which constitutes an essential element of the active site of the mature decarboxylase.

The protein localises to the golgi apparatus membrane. It is found in the endosome membrane. The catalysed reaction is a 1,2-diacyl-sn-glycero-3-phospho-L-serine + H(+) = a 1,2-diacyl-sn-glycero-3-phosphoethanolamine + CO2. The protein operates within phospholipid metabolism; phosphatidylethanolamine biosynthesis; phosphatidylethanolamine from CDP-diacylglycerol: step 2/2. Functionally, catalyzes the formation of phosphatidylethanolamine (PtdEtn) from phosphatidylserine (PtdSer). Plays a central role in phospholipid metabolism and in the interorganelle trafficking of phosphatidylserine. This chain is Phosphatidylserine decarboxylase proenzyme 2, found in Komagataella phaffii (strain GS115 / ATCC 20864) (Yeast).